The following is a 103-amino-acid chain: Signal recognition particle 19 kDa protein (103 aa).

It belongs to the SRP19 family. In terms of assembly, part of the signal recognition particle protein translocation system, which is composed of SRP and FtsY. Archaeal SRP consists of a 7S RNA molecule of 300 nucleotides and two protein subunits: SRP54 and SRP19.

It localises to the cytoplasm. Its function is as follows. Involved in targeting and insertion of nascent membrane proteins into the cytoplasmic membrane. Binds directly to 7S RNA and mediates binding of the 54 kDa subunit of the SRP. The polypeptide is Signal recognition particle 19 kDa protein (Methanopyrus kandleri (strain AV19 / DSM 6324 / JCM 9639 / NBRC 100938)).